The chain runs to 221 residues: 5-methylthioribulose-1-phosphate/5-deoxyribulose-1-phosphate aldolase (221 aa).

Glu75 (proton donor/acceptor) is an active-site residue. Residues Glu75, His94, His96, and His157 each contribute to the Co(2+) site.

It belongs to the aldolase class II family. The cofactor is Co(2+).

The catalysed reaction is 5-(methylsulfanyl)-D-ribulose 1-phosphate = 2-(methylsulfanyl)acetaldehyde + dihydroxyacetone phosphate. The enzyme catalyses 5-deoxy-D-ribulose 1-phosphate = dihydroxyacetone phosphate + acetaldehyde. It participates in amino-acid biosynthesis; L-methionine biosynthesis via salvage pathway. Functionally, uses 5-methylthioribulose-1-phosphate to yield 2-(methylthio)acetaldehyde and dihydroxyacetone phosphate. Can also use 5-deoxyribulose 1-phosphate to yield acetaldehyde and dihydroxyacetone phosphate. Part of a bifunctional DHAP-shunt salvage pathway for SAM by-products. The sequence is that of 5-methylthioribulose-1-phosphate/5-deoxyribulose-1-phosphate aldolase from Rhodospirillum rubrum (strain ATCC 11170 / ATH 1.1.1 / DSM 467 / LMG 4362 / NCIMB 8255 / S1).